Consider the following 467-residue polypeptide: 3-isopropylmalate dehydratase large subunit (467 aa).

Residues Cys349, Cys409, and Cys412 each contribute to the [4Fe-4S] cluster site. The tract at residues 422–443 (PGQRSASTSNRNFEGRQGRGGR) is disordered.

The protein belongs to the aconitase/IPM isomerase family. LeuC type 1 subfamily. As to quaternary structure, heterodimer of LeuC and LeuD. It depends on [4Fe-4S] cluster as a cofactor.

It carries out the reaction (2R,3S)-3-isopropylmalate = (2S)-2-isopropylmalate. It functions in the pathway amino-acid biosynthesis; L-leucine biosynthesis; L-leucine from 3-methyl-2-oxobutanoate: step 2/4. Catalyzes the isomerization between 2-isopropylmalate and 3-isopropylmalate, via the formation of 2-isopropylmaleate. The sequence is that of 3-isopropylmalate dehydratase large subunit from Paramagnetospirillum magneticum (strain ATCC 700264 / AMB-1) (Magnetospirillum magneticum).